An 807-amino-acid chain; its full sequence is MMAKNNKTTEAKMSKKRAASEESDVEEDEDKLLSVDGLIDAEASESDEDDDEYESAVEEKESSSDKEAQDDSDDDSDAELNKLLAEEEGDEEEDYDSSEFSDDTTSLTDRLSGVKLQTIVDPNIYSKYADGSDRIIKPEINPVYDSDDSDAETQNTIGNIPLSAYDEMPHIGYDINGKRIMRPAKGSALDQLLDSIELPEGWTGLLDKNSGSSLNLTKEELELISKIQRNEQTDDSINPYEPLIDWFTRHEEVMPLTAVPEPKRRFVPSKNEAKRVMKIVRAIREGRIIPPKKLKEMKEKEKTENYQYDLWGDSTETNDHVMHLRAPKLPPPTNEESYNPPEEYLLSPEEKEAWENTEYSERERNFVPQKYSALRKVPGYGESIRERFERSLDLYLAPRVRKNKLNIDPNSLIPELPSPKDLRPFPIRCSTIYAGHKGKVRTLSIDPSGLWLATGSDDGTVRVWEILTGREVYRTTLIDDEENPDDHIECIEWNPDANNGILAVAVGENIHLIVPPIFGYDIENNGKTKIEDGFGYDTFGTVKKSNLEVNENGDGDEDGENESAKNAVKKQVAQWNKPSQKQLEKDICITISCKKTVKKLSWHRKGDYFVTVQPDSGNTSVLIHQVSKHLTQSPFKKSKGIIMDAKFHPFKPQLFVCSQRYVRIYDLSQQILVKKLLPGARWLSKIDIHPRGDNLIASSFDKRVLWHDLDLASTPYKTLRYHEKAVRSVNFHKKLPLFSSAADDGTIHVFHATVYDDMMKNPMIVPLKKLTGHKVINSLGVLDAIWHPREAWLFSAGADNTARLWTT.

Residues 1–112 (MMAKNNKTTE…DTTSLTDRLS (112 aa)) are disordered. 2 stretches are compositionally biased toward acidic residues: residues 21–30 (EESDVEEDED) and 42–56 (EASESDEDDDEYESA). At serine 23 the chain carries Phosphoserine. Residues 57 to 69 (VEEKESSSDKEAQ) are compositionally biased toward basic and acidic residues. Serine 72 and serine 76 each carry phosphoserine. Positions 86 to 102 (EEEGDEEEDYDSSEFSD) are enriched in acidic residues. Residue lysine 127 forms a Glycyl lysine isopeptide (Lys-Gly) (interchain with G-Cter in ubiquitin) linkage. Serine 146 and serine 149 each carry phosphoserine. Residues 265 to 383 (RFVPSKNEAK…LRKVPGYGES (119 aa)) are required for interaction with NOP7. The interval 383-419 (SIRERFERSLDLYLAPRVRKNKLNIDPNSLIPELPSP) is required for interaction with YTM1. At serine 418 the chain carries Phosphoserine. WD repeat units follow at residues 435–474 (GHKGKVRTLSIDPSGLWLATGSDDGTVRVWEILTGREVYR), 483–523 (NPDD…YDIE), 592–634 (SCKK…TQSP), 637–675 (KSKGIIMDAKFHPFKPQLFVCSQRYVRIYDLSQQILVKK), 678–717 (PGARWLSKIDIHPRGDNLIASSFDKRVLWHDLDLASTPYK), 721–760 (YHEKAVRSVNFHKKLPLFSSAADDGTIHVFHATVYDDMMK), and 776–807 (INSLGVLDAIWHPREAWLFSAGADNTARLWTT).

This sequence belongs to the WD repeat BOP1/ERB1 family. Component of the NOP7 complex, composed of ERB1, NOP7 and YTM1. The complex is held together by ERB1, which interacts with NOP7 via its N-terminal domain and with YTM1 via a high-affinity interaction between the seven-bladed beta-propeller domains of the 2 proteins. The NOP7 complex associates with the 66S pre-ribosome.

Its subcellular location is the nucleus. The protein resides in the nucleolus. It is found in the nucleoplasm. Functionally, component of the NOP7 complex, which is required for maturation of the 25S and 5.8S ribosomal RNAs and formation of the 60S ribosome. The polypeptide is Ribosome biogenesis protein ERB1 (Saccharomyces cerevisiae (strain YJM789) (Baker's yeast)).